Consider the following 237-residue polypeptide: Phosphoribosylaminoimidazole-succinocarboxamide synthase (237 aa).

This sequence belongs to the SAICAR synthetase family.

It catalyses the reaction 5-amino-1-(5-phospho-D-ribosyl)imidazole-4-carboxylate + L-aspartate + ATP = (2S)-2-[5-amino-1-(5-phospho-beta-D-ribosyl)imidazole-4-carboxamido]succinate + ADP + phosphate + 2 H(+). It participates in purine metabolism; IMP biosynthesis via de novo pathway; 5-amino-1-(5-phospho-D-ribosyl)imidazole-4-carboxamide from 5-amino-1-(5-phospho-D-ribosyl)imidazole-4-carboxylate: step 1/2. The chain is Phosphoribosylaminoimidazole-succinocarboxamide synthase from Listeria monocytogenes serovar 1/2a (strain ATCC BAA-679 / EGD-e).